The chain runs to 126 residues: UPF0538 protein C2orf76 homolog (126 aa).

The protein belongs to the UPF0538 family.

This Bos taurus (Bovine) protein is UPF0538 protein C2orf76 homolog.